Consider the following 179-residue polypeptide: Adenine phosphoribosyltransferase (179 aa).

The protein belongs to the purine/pyrimidine phosphoribosyltransferase family. In terms of assembly, homodimer.

The protein resides in the cytoplasm. The catalysed reaction is AMP + diphosphate = 5-phospho-alpha-D-ribose 1-diphosphate + adenine. The protein operates within purine metabolism; AMP biosynthesis via salvage pathway; AMP from adenine: step 1/1. Catalyzes a salvage reaction resulting in the formation of AMP, that is energically less costly than de novo synthesis. The protein is Adenine phosphoribosyltransferase of Ruegeria pomeroyi (strain ATCC 700808 / DSM 15171 / DSS-3) (Silicibacter pomeroyi).